We begin with the raw amino-acid sequence, 534 residues long: Beta-glucosidase 32 (534 aa).

The signal sequence occupies residues 1 to 22 (MAIKLIALVITICVASWDSAQG). Q51 serves as a coordination point for a beta-D-glucoside. An N-linked (GlcNAc...) asparagine glycan is attached at N68. A beta-D-glucoside is bound by residues H154 and 199-200 (NE). The active-site Proton donor is the E200. Cysteines 219 and 227 form a disulfide. Y344 lines the a beta-D-glucoside pocket. Residue N374 is glycosylated (N-linked (GlcNAc...) asparagine). An a beta-D-glucoside-binding site is contributed by E417. The active-site Nucleophile is the E417. Residue N425 is glycosylated (N-linked (GlcNAc...) asparagine). A beta-D-glucoside contacts are provided by residues W467, 474-475 (EW), and F483.

It belongs to the glycosyl hydrolase 1 family.

It catalyses the reaction Hydrolysis of terminal, non-reducing beta-D-glucosyl residues with release of beta-D-glucose.. The polypeptide is Beta-glucosidase 32 (Arabidopsis thaliana (Mouse-ear cress)).